The sequence spans 178 residues: Prion-like protein doppel (178 aa).

Residues 1-25 (MRKHLGGCWLAIVCILLFSQLCSVK) form the signal peptide. The tract at residues 27 to 50 (RGIKHRIKWNRKVLPSTSQVTEAR) is flexible tail. A globular region spans residues 51 to 154 (TAEIRPGAFI…KHCDFWLERG (104 aa)). Cystine bridges form between C94–C147 and C108–C142. N98 and N110 each carry an N-linked (GlcNAc...) asparagine glycan. The tract at residues 124-141 (KQDNKLYQRVLWQLIREL) is cu(2+) binding. Residue G154 is the site of GPI-anchor amidated glycine attachment. The propeptide at 155 to 178 (AGLRVTLDQPMMLCLLVFIWFIVK) is removed in mature form.

The protein belongs to the prion family. Post-translationally, N-glycosylated. In terms of processing, O-glycosylated. Strongly expressed in testis. Detected at low levels in ovary, spleen, kidney and mammary gland.

It localises to the cell membrane. In terms of biological role, required for normal acrosome reaction and for normal male fertility. Can bind Cu(2+). The polypeptide is Prion-like protein doppel (PRND) (Bos taurus (Bovine)).